The chain runs to 1641 residues: Alpha-2-macroglobulin (1641 aa).

A signal peptide spans 1-31 (MRDRVAMMLRPLVRGWIPRAVLLLTVAFSFG). Residue Cys-32 is the site of N-palmitoyl cysteine attachment. A lipid anchor (S-diacylglycerol cysteine) is attached at Cys-32. Residues 1166–1169 (CAEQ) constitute a cross-link (isoglutamyl cysteine thioester (Cys-Gln)).

The protein belongs to the protease inhibitor I39 (alpha-2-macroglobulin) family. Bacterial alpha-2-macroglobulin subfamily.

The protein resides in the cell membrane. Functionally, protects the bacterial cell from host peptidases. The sequence is that of Alpha-2-macroglobulin from Xylella fastidiosa (strain 9a5c).